The sequence spans 377 residues: Delta(12) fatty acid desaturase DES8.11 (377 aa).

A run of 2 helical transmembrane segments spans residues 55–75 (LIVA…IPTP) and 79–99 (LAWP…WVIG). A Histidine box-1 motif is present at residues 100 to 104 (HECGH). The chain crosses the membrane as a helical span at residues 112-132 (LIDDIVGFVLHSALLTPYFSW). A Histidine box-2 motif is present at residues 136–140 (HRNHH). The next 3 helical transmembrane spans lie at 174-194 (VFTL…TNIS), 220-240 (VLLS…LVAA), and 244-264 (AWVI…FVLI). Residues 310–314 (HVLHH) carry the Histidine box-3 motif.

The protein belongs to the fatty acid desaturase type 1 family.

Its subcellular location is the membrane. It functions in the pathway lipid metabolism; polyunsaturated fatty acid biosynthesis. Functionally, converts linoleic acid into a conjugated octadecatrienoic acid, probably calendic acid. This chain is Delta(12) fatty acid desaturase DES8.11, found in Calendula officinalis (Pot marigold).